Here is a 427-residue protein sequence, read N- to C-terminus: Enolase (427 aa).

Gln-162 provides a ligand contact to (2R)-2-phosphoglycerate. The Proton donor role is filled by Glu-204. Residues Asp-241, Glu-284, and Asp-311 each coordinate Mg(2+). (2R)-2-phosphoglycerate is bound by residues Lys-336, Arg-365, Ser-366, and Lys-387. The active-site Proton acceptor is the Lys-336.

It belongs to the enolase family. Mg(2+) is required as a cofactor.

It is found in the cytoplasm. The protein localises to the secreted. It localises to the cell surface. The catalysed reaction is (2R)-2-phosphoglycerate = phosphoenolpyruvate + H2O. It participates in carbohydrate degradation; glycolysis; pyruvate from D-glyceraldehyde 3-phosphate: step 4/5. Functionally, catalyzes the reversible conversion of 2-phosphoglycerate (2-PG) into phosphoenolpyruvate (PEP). It is essential for the degradation of carbohydrates via glycolysis. The sequence is that of Enolase from Corynebacterium kroppenstedtii (strain DSM 44385 / JCM 11950 / CIP 105744 / CCUG 35717).